The following is a 322-amino-acid chain: Thymidylate synthase (322 aa).

DUMP contacts are provided by residues arginine 25 and 184 to 185; that span reads RR. The active-site Nucleophile is cysteine 204. DUMP contacts are provided by residues 224–227, asparagine 235, and 265–267; these read RSGD and HIY. Aspartate 227 provides a ligand contact to (6R)-5,10-methylene-5,6,7,8-tetrahydrofolate. Alanine 321 serves as a coordination point for (6R)-5,10-methylene-5,6,7,8-tetrahydrofolate.

Belongs to the thymidylate synthase family. Bacterial-type ThyA subfamily. Homodimer.

Its subcellular location is the cytoplasm. The enzyme catalyses dUMP + (6R)-5,10-methylene-5,6,7,8-tetrahydrofolate = 7,8-dihydrofolate + dTMP. It functions in the pathway pyrimidine metabolism; dTTP biosynthesis. Catalyzes the reductive methylation of 2'-deoxyuridine-5'-monophosphate (dUMP) to 2'-deoxythymidine-5'-monophosphate (dTMP) while utilizing 5,10-methylenetetrahydrofolate (mTHF) as the methyl donor and reductant in the reaction, yielding dihydrofolate (DHF) as a by-product. This enzymatic reaction provides an intracellular de novo source of dTMP, an essential precursor for DNA biosynthesis. This chain is Thymidylate synthase, found in Leuconostoc mesenteroides subsp. mesenteroides (strain ATCC 8293 / DSM 20343 / BCRC 11652 / CCM 1803 / JCM 6124 / NCDO 523 / NBRC 100496 / NCIMB 8023 / NCTC 12954 / NRRL B-1118 / 37Y).